The following is a 2531-amino-acid chain: Neurogenic locus notch homolog protein 1 (2531 aa).

Residues 1–18 form the signal peptide; sequence MPRLLTPLLCLTLLPALA. Residues 19–1725 are Extracellular-facing; that stretch reads ARGLRCSQPS…VEPPLPSQLH (1707 aa). 4 consecutive EGF-like domains span residues 20–58, 59–99, 102–139, and 140–176; these read RGLR…QRCQ, DSNP…PLCL, LDNA…KSCQ, and QADP…PTCR. 32 disulfides stabilise this stretch: C24–C37, C31–C46, C63–C74, C68–C87, C89–C98, C106–C117, C111–C127, C129–C138, C144–C155, C149–C164, C166–C175, C182–C195, C189–C204, C206–C215, C222–C233, C227–C243, C245–C254, C261–C272, C266–C281, C283–C292, C299–C312, C306–C321, C323–C332, C339–C350, C344–C359, C361–C370, C376–C387, C381–C398, C400–C409, C416–C429, C423–C438, and C440–C449. S65 carries O-linked (Glc...) serine glycosylation. An O-linked (Fuc...) threonine glycan is attached at T73. T116 carries O-linked (Fuc...) threonine glycosylation. O-linked (Glc...) serine glycosylation is present at S146. In terms of domain architecture, EGF-like 5; calcium-binding spans 178–216; the sequence is DVNECSQNPGLCRHGGTCHNEIGSYRCACRATHTGPHCE. T194 carries an O-linked (Fuc...) threonine glycan. The EGF-like 6 domain maps to 218-255; the sequence is PYVPCSPSPCQNGGTCRPTGDTTHECACLPGFAGQNCE. T232 carries O-linked (Fuc...) threonine; alternate glycosylation. O-linked (GalNAc...) threonine; alternate glycosylation is present at T232. An EGF-like 7; calcium-binding domain is found at 257 to 293; the sequence is NVDDCPGNNCKNGGACVDGVNTYNCRCPPEWTGQYCT. Residues 295–333 enclose the EGF-like 8; calcium-binding domain; the sequence is DVDECQLMPNACQNGGTCHNTHGGYNCVCVNGWTGEDCS. T311 carries O-linked (Fuc...) threonine glycosylation. Residues 335 to 371 form the EGF-like 9; calcium-binding domain; the sequence is NIDDCASAACFQGATCHDRVASFYCECPHGRTGLLCH. S341 carries an O-linked (Glc...) serine glycan. O-linked (Fuc...) threonine glycosylation occurs at T349. Residues 372–410 form the EGF-like 10; calcium-binding domain; it reads LNDACISNPCNEGSNCDTNPVNGKAICTCPSGYTGPACS. Residue S378 is glycosylated (O-linked (Glc...) serine). Residues 412–450 form the EGF-like 11; calcium-binding domain; sequence DVDECALGANPCEHAGKCLNTLGSFECQCLQGYTGPRCE. The interval 420–421 is interaction with DLL4; it reads AN. T432 and S435 together coordinate Ca(2+). A glycan (O-linked (Glc...) serine) is linked at S435. The tract at residues 448 to 452 is interaction with DLL4; that stretch reads RCEID. Ca(2+)-binding residues include D452, V453, and E455. Residues 452 to 488 enclose the EGF-like 12; calcium-binding domain; that stretch reads DVNECISNPCQNDATCLDQIGEFQCICMPGYEGVYCE. Intrachain disulfides connect C456-C467, C461-C476, and C478-C487. A glycan (O-linked (Glc...) serine) is linked at S458. The O-linked (Fuc...) threonine glycan is linked to T466. Residues D469 and Q470 each coordinate Ca(2+). Ca(2+) is bound by residues N490, T491, and E493. The EGF-like 13; calcium-binding domain maps to 490–526; that stretch reads NTDECASSPCLHNGHCMDKINEFQCQCPKGFNGHLCQ. Cystine bridges form between C494–C505, C499–C514, C516–C525, C532–C543, C537–C552, C554–C563, C570–C580, C575–C589, C591–C600, C607–C618, C612–C627, C629–C638, C645–C655, C650–C664, C666–C675, C682–C693, C687–C702, C704–C713, C720–C730, C725–C739, C741–C750, C757–C768, C762–C777, C779–C788, C795–C806, C800–C815, C817–C826, C833–C844, C838–C855, C857–C866, C873–C884, C878–C893, C895–C904, C911–C922, C916–C931, C933–C942, C949–C960, C954–C969, C971–C980, C987–C998, C992–C1007, C1009–C1018, C1025–C1036, C1030–C1045, C1047–C1056, C1063–C1074, C1068–C1083, C1085–C1094, C1101–C1122, C1116–C1131, C1133–C1142, C1149–C1160, C1154–C1169, C1171–C1180, C1187–C1198, C1192–C1207, C1209–C1218, C1225–C1244, C1238–C1253, C1255–C1264, C1271–C1284, C1276–C1293, C1295–C1304, C1311–C1322, C1316–C1334, C1336–C1345, C1352–C1363, C1357–C1372, C1374–C1383, C1391–C1403, C1397–C1414, C1416–C1425, C1449–C1472, C1454–C1467, and C1463–C1479. Residue S496 is glycosylated (O-linked (Glc...) serine). D507 and K508 together coordinate Ca(2+). An EGF-like 14; calcium-binding domain is found at 528–564; the sequence is DVDECASTPCKNGAKCLDGPNTYTCVCTEGYTGTHCE. O-linked (Glc...) serine glycosylation is present at S534. One can recognise an EGF-like 15; calcium-binding domain in the interval 566-601; sequence DIDECDPDPCHYGSCKDGVATFTCLCQPGYTGHHCE. The region spanning 603 to 639 is the EGF-like 16; calcium-binding domain; the sequence is NINECHSQPCRHGGTCQDRDNSYLCLCLKGTTGPNCE. Residue S609 is glycosylated (O-linked (Glc...) serine). Residue T617 is glycosylated (O-linked (Fuc...) threonine). The 36-residue stretch at 641–676 folds into the EGF-like 17; calcium-binding domain; it reads NLDDCASNPCDSGTCLDKIDGYECACEPGYTGSMCN. The O-linked (Glc...) serine glycan is linked to S647. One can recognise an EGF-like 18; calcium-binding domain in the interval 678–714; it reads NIDECAGSPCHNGGTCEDGIAGFTCRCPEGYHDPTCL. Residue T692 is glycosylated (O-linked (Fuc...) threonine). The EGF-like 19; calcium-binding domain occupies 716 to 751; that stretch reads EVNECNSNPCIHGACRDGLNGYKCDCAPGWSGTNCD. An O-linked (Glc...) serine glycan is attached at S722. Positions 753–789 constitute an EGF-like 20; calcium-binding domain; the sequence is NNNECESNPCVNGGTCKDMTSGYVCTCREGFSGPNCQ. A glycan (O-linked (Glc...) serine) is linked at S759. T767 is a glycosylation site (O-linked (Fuc...) threonine). Residue S784 is glycosylated (O-linked (GlcNAc) serine). In terms of domain architecture, EGF-like 21; calcium-binding spans 791–827; that stretch reads NINECASNPCLNQGTCIDDVAGYKCNCPLPYTGATCE. S797 is a glycosylation site (O-linked (Glc...) serine). Residue T805 is glycosylated (O-linked (Fuc...) threonine). One can recognise an EGF-like 22 domain in the interval 829–867; sequence VLAPCATSPCKNSGVCKESEDYESFSCVCPTGWQGQTCE. The region spanning 869–905 is the EGF-like 23; calcium-binding domain; the sequence is DINECVKSPCRHGASCQNTNGSYRCLCQAGYTGRNCE. N-linked (GlcNAc...) asparagine glycosylation is present at N888. Residue T900 is glycosylated (O-linked (GlcNAc) threonine). The EGF-like 24 domain maps to 907–943; sequence DIDDCRPNPCHNGGSCTDGINTAFCDCLPGFQGAFCE. The O-linked (Fuc) serine glycan is linked to S921. Residues 945–981 enclose the EGF-like 25; calcium-binding domain; that stretch reads DINECASNPCQNGANCTDCVDSYTCTCPVGFNGIHCE. O-linked (Glc...) serine glycosylation is present at S951. Residue N959 is glycosylated (N-linked (GlcNAc...) asparagine). The EGF-like 26 domain occupies 983–1019; that stretch reads NTPDCTESSCFNGGTCVDGINSFTCLCPPGFTGSYCQ. The O-linked (Fuc...) threonine glycan is linked to T997. One can recognise an EGF-like 27; calcium-binding domain in the interval 1021–1057; sequence DVNECDSRPCLHGGTCQDSYGTYKCTCPQGYTGLNCQ. O-linked (Glc...) serine glycosylation occurs at S1027. A glycan (O-linked (Fuc...) threonine) is linked at T1035. 2 consecutive EGF-like domains span residues 1059–1095 and 1097–1143; these read LVRW…VNCD and LSVS…SYCE. S1065 carries an O-linked (Glc...) serine glycan. Positions 1145–1181 constitute an EGF-like 30; calcium-binding domain; it reads EVDECSPNPCQNGATCTDYLGGFSCKCVAGYHGSNCS. T1159 carries O-linked (Fuc...) threonine glycosylation. N-linked (GlcNAc...) asparagine glycosylation is present at N1179. The EGF-like 31; calcium-binding domain maps to 1183–1219; sequence EINECLSQPCQNGGTCIDLTNSYKCSCPRGTQGVHCE. Residue S1189 is glycosylated (O-linked (Glc...) serine). A glycan (O-linked (Fuc...) threonine) is linked at T1197. Residues 1221 to 1265 enclose the EGF-like 32; calcium-binding domain; that stretch reads NVDDCHPPLDPASRSPKCFNNGTCVDQVGGYTCTCPPGFVGERCE. An N-linked (GlcNAc...) asparagine glycan is attached at N1241. EGF-like domains lie at 1267–1305, 1307–1346, 1348–1384, and 1387–1426; these read DVNE…RRCE, VING…ATCE, DART…PECQ, and ASSP…LLCH. O-linked (Glc...) serine glycosylation is present at S1273. A glycan (O-linked (Fuc...) threonine) is linked at T1362. An O-linked (GlcNAc...) threonine glycan is attached at T1379. A glycan (O-linked (Fuc...) threonine; alternate) is linked at T1402. O-linked (GalNAc...) threonine; alternate glycosylation occurs at T1402. 3 LNR repeats span residues 1449-1489, 1490-1531, and 1532-1571; these read CELP…PWKN, CTQS…CNPL, and YDQY…RLAA. The Ca(2+) site is built by D1457, N1460, D1475, and D1478. A glycan (N-linked (GlcNAc...) asparagine) is linked at N1489. Disulfide bonds link C1490–C1514, C1496–C1509, C1505–C1521, C1536–C1549, and C1545–C1561. N1587 carries N-linked (GlcNAc...) asparagine glycosylation. Positions 1718–1750 are interaction with PSEN1; the sequence is PPLPSQLHLMYVAAAAFVLLFFVGCGVLLSRKR. A helical membrane pass occupies residues 1726–1746; that stretch reads LMYVAAAAFVLLFFVGCGVLL. Residues 1747 to 2531 lie on the Cytoplasmic side of the membrane; it reads SRKRRRQHGQ…QITHIPEAFK (785 aa). K1749 participates in a covalent cross-link: Glycyl lysine isopeptide (Lys-Gly) (interchain with G-Cter in ubiquitin). Residues 1770–1798 form a disordered region; that stretch reads KKKRREPLGEDSVGLKPLKNASDGALMDD. Phosphothreonine is present on T1851. ANK repeat units follow at residues 1917 to 1946, 1950 to 1980, 1984 to 2013, 2017 to 2046, and 2050 to 2079; these read TGET…DANI, MGRT…DLDA, DGTT…DVNA, LGKS…NKDM, and KEET…NRDI. The interval 1937–1945 is HIF1AN-binding; sequence LLEASADAN. At N1945 the chain carries (3S)-3-hydroxyasparagine; by HIF1AN; partial. The segment at 2004–2012 is HIF1AN-binding; sequence LINSHADVN. N2012 bears the (3S)-3-hydroxyasparagine; by HIF1AN; partial mark. Disordered regions lie at residues 2140 to 2185, 2382 to 2428, and 2440 to 2531; these read KSAT…DSSS, QPQN…SLPV, and PTSL…EAFK. Residues 2382 to 2395 show a composition bias toward low complexity; the sequence is QPQNLQPPSQPHLS. The span at 2440–2478 shows a compositional bias: polar residues; sequence PTSLPSSMVPPMTTTQFLTPPSQHSYSSSPVDNTPSHQL. The segment covering 2488 to 2503 has biased composition (low complexity); that stretch reads PSPESPDQWSSSSPHS. A compositionally biased stretch (polar residues) spans 2504–2524; the sequence is NISDWSEGISSPPTTMPSQIT.

The protein belongs to the NOTCH family. Heterodimer of a C-terminal fragment N(TM) and an N-terminal fragment N(EC) which are probably linked by disulfide bonds. Interacts with DNER, DTX1, DTX2 and RBPJ/RBPSUH. Also interacts with MAML1, MAML2 and MAML3 which act as transcriptional coactivators for NOTCH1. Notch 1 intracellular domain interacts with SNW1; the interaction involves multimerized NOTCH1 NICD and is implicated in a formation of an intermediate preactivation complex which associates with DNA-bound CBF-1/RBPJ. The activated membrane-bound form interacts with AAK1 which promotes NOTCH1 stabilization. Forms a trimeric complex with FBXW7 and SGK1. Interacts with HIF1AN. HIF1AN negatively regulates the function of notch intracellular domain (NICD), accelerating myogenic differentiation. Interacts (via NICD) with SNAI1 (via zinc fingers); the interaction induces SNAI1 degradation via MDM2-mediated ubiquitination and inhibits SNAI1-induced cell invasion. Interacts (via NICD) with MDM2A. Interacts (via NICD) with BCL6; the interaction decreases MAML1 recruitment by NOTCH1 NICD on target genes DNA and inhibits NOTCH1 transactivation activity. Interacts with THBS4. Interacts (via the EGF-like repeat region) with CCN3 (via CTCK domain). Interacts (via EGF-like domains) with DLL4 (via N-terminal DSL and MNNL domains). Interacts with ZMIZ1. Interacts (via NICD domain) with MEGF10 (via the cytoplasmic domain). Interacts with DLL1 and JAG1. Interacts (via NICD domain) with PRAG1. Forms a complex with PRAG1, N1ICD and MAML1, in a MAML1-dependent manner. Interacts (via transmembrane region) with PSEN1; the interaction is direct. Interacts with ZFP64. Synthesized in the endoplasmic reticulum as an inactive form which is proteolytically cleaved by a furin-like convertase in the trans-Golgi network before it reaches the plasma membrane to yield an active, ligand-accessible form. Cleavage results in a C-terminal fragment N(TM) and a N-terminal fragment N(EC). Following ligand binding, it is cleaved by ADAM17 to yield a membrane-associated intermediate fragment called notch extracellular truncation (NEXT). Following endocytosis, this fragment is then cleaved by one of the catalytic subunits of gamma-secretase (PSEN1 or PSEN2) to release a Notch-derived peptide containing the intracellular domain (NICD) from the membrane. In terms of processing, phosphorylated. Post-translationally, O-linked glycosylation by GALNT11 is involved in determination of left/right symmetry: glycosylation promotes activation of NOTCH1, possibly by promoting cleavage by ADAM17, modulating the balance between motile and immotile (sensory) cilia at the left-right organiser (LRO). O-glycosylated on the EGF-like domains. O-glucosylated at Ser-435 by KDELC1 and KDELC2. Contains both O-linked fucose and O-linked glucose in the EGF-like domains 11, 12 and 13, which are interacting with the residues on DLL4. O-glycosylation at Ser-1027 is only partial. MFNG-, RFNG- and LFNG-mediated modification of O-fucose residues at specific EGF-like domains results in inhibition of its activation by JAG1 and enhancement of its activation by DLL1 via an increased binding to DLL1. Ubiquitinated. Undergoes 'Lys-29'-linked polyubiquitination by ITCH; promotes the lysosomal degradation of non-activated internalized NOTCH1. Deubiquitination by USP12 is required for transport of internalized non-activated receptor from late endosomes to lysosomes for degradation. Monoubiquitination at Lys-1749 is required for activation by gamma-secretase cleavage, it promotes interaction with AAK1, which stabilizes it. Deubiquitination by EIF3F is necessary for nuclear import of activated Notch. In terms of processing, hydroxylated at Asn-1945 and Asn-2012 by HIF1AN. Hydroxylation reduces affinity for HI1AN and may thus indirectly modulate negative regulation of NICD. As to expression, highly expressed in the brain, lung and thymus. Expressed at lower levels in the spleen, bone-marrow, spinal cord, eyes, mammary gland, liver, intestine, skeletal muscle, kidney and heart. In the hair follicle, highly expressed exclusively in the epithelial compartment.

The protein localises to the cell membrane. It localises to the late endosome membrane. The protein resides in the nucleus. Functionally, functions as a receptor for membrane-bound ligands Jagged-1 (JAG1), Jagged-2 (JAG2) and Delta-1 (DLL1) to regulate cell-fate determination. Upon ligand activation through the released notch intracellular domain (NICD) it forms a transcriptional activator complex with RBPJ/RBPSUH and activates genes of the enhancer of split locus. Affects the implementation of differentiation, proliferation and apoptotic programs. Involved in angiogenesis; negatively regulates endothelial cell proliferation and migration and angiogenic sprouting. Involved in the maturation of both CD4(+) and CD8(+) cells in the thymus. Important for follicular differentiation and possibly cell fate selection within the follicle. During cerebellar development, functions as a receptor for neuronal DNER and is involved in the differentiation of Bergmann glia. Represses neuronal and myogenic differentiation. May play an essential role in postimplantation development, probably in some aspect of cell specification and/or differentiation. May be involved in mesoderm development, somite formation and neurogenesis. May enhance HIF1A function by sequestering HIF1AN away from HIF1A. Required for the THBS4 function in regulating protective astrogenesis from the subventricular zone (SVZ) niche after injury. Involved in determination of left/right symmetry by modulating the balance between motile and immotile (sensory) cilia at the left-right organiser (LRO). This is Neurogenic locus notch homolog protein 1 (Notch1) from Mus musculus (Mouse).